The following is a 267-amino-acid chain: Regulatory protein VirG (267 aa).

Positions 29–143 constitute a Response regulatory domain; the sequence is HVLLVDDDVA…EFLARIRVAL (115 aa). A 4-aspartylphosphate modification is found at Asp78. The segment at residues 155–255 is a DNA-binding region (ompR/PhoB-type); the sequence is RRSFCFTDWT…ARGAGYFFDA (101 aa).

Post-translationally, phosphorylated by wide host range (WHR) VirA protein.

It localises to the cytoplasm. In terms of biological role, virG is required for the positive regulation of at least two vir loci encoded by the Ti plasmid of A.tumefaciens. In Agrobacterium tumefaciens (strain 15955), this protein is Regulatory protein VirG (virG).